The sequence spans 338 residues: tRNA N6-adenosine threonylcarbamoyltransferase (338 aa).

Residues His-110 and His-114 each coordinate Fe cation. Substrate contacts are provided by residues 132–136 (VLSGG), Asp-165, Gly-178, and Asn-274. Residue Asp-298 participates in Fe cation binding.

Belongs to the KAE1 / TsaD family. Fe(2+) serves as cofactor.

It is found in the cytoplasm. The enzyme catalyses L-threonylcarbamoyladenylate + adenosine(37) in tRNA = N(6)-L-threonylcarbamoyladenosine(37) in tRNA + AMP + H(+). In terms of biological role, required for the formation of a threonylcarbamoyl group on adenosine at position 37 (t(6)A37) in tRNAs that read codons beginning with adenine. Is involved in the transfer of the threonylcarbamoyl moiety of threonylcarbamoyl-AMP (TC-AMP) to the N6 group of A37, together with TsaE and TsaB. TsaD likely plays a direct catalytic role in this reaction. This Borrelia recurrentis (strain A1) protein is tRNA N6-adenosine threonylcarbamoyltransferase.